Consider the following 354-residue polypeptide: Histidinol-phosphate aminotransferase (354 aa).

N6-(pyridoxal phosphate)lysine is present on Lys215.

This sequence belongs to the class-II pyridoxal-phosphate-dependent aminotransferase family. Histidinol-phosphate aminotransferase subfamily. Homodimer. The cofactor is pyridoxal 5'-phosphate.

The catalysed reaction is L-histidinol phosphate + 2-oxoglutarate = 3-(imidazol-4-yl)-2-oxopropyl phosphate + L-glutamate. Its pathway is amino-acid biosynthesis; L-histidine biosynthesis; L-histidine from 5-phospho-alpha-D-ribose 1-diphosphate: step 7/9. The sequence is that of Histidinol-phosphate aminotransferase from Vesicomyosocius okutanii subsp. Calyptogena okutanii (strain HA).